We begin with the raw amino-acid sequence, 869 residues long: Serendipity locus protein H-1 (869 aa).

A compositionally biased stretch (basic and acidic residues) spans 1–17 (MEGGKGEGKRMKEEAPS). 2 disordered regions span residues 1-32 (MEGGKGEGKRMKEEAPSKKLPPKIYGGDAGTP) and 134-165 (FSVTFLRPEPPNAFTNSPFKKTSSSGTSTPVK). The segment covering 146–164 (AFTNSPFKKTSSSGTSTPV) has biased composition (polar residues). 8 C2H2-type zinc fingers span residues 269 to 293 (HKCLDCNGLLLETPDEVAKHEAAAH), 299 to 321 (YRCSECQREFELLAGLKKHLKTH), 331 to 352 (KKCPDCGKCLKLGSMWMHRKIH), 358 to 380 (YQCDICGQKFVQKINLTHHARIH), 386 to 408 (YECPECQKRFQERSHLQRHQKYH), 414 to 436 (YRCEKCGKMYKTERCLKVHNLVH), 442 to 464 (FACTVCDKSFISNSKLKQHSNIH), and 470 to 493 (FKCNYCPRDFTNFPNWLKHTRRRH). Disordered stretches follow at residues 554 to 573 (TSTAAPAPAKQARKKKQPQQ) and 617 to 652 (PKQTKAKRERKQLAPKQLQQKPQLLQQGQPQQSSLE). Over residues 630 to 648 (APKQLQQKPQLLQQGQPQQ) the composition is skewed to low complexity.

In terms of tissue distribution, distribution varies between nurse cells and the oocyte during oogenesis. Weakly expressed in follicle and border cells.

The protein localises to the nucleus. In terms of biological role, may belong to a complex set of multifingered proteins which play an important role in gene activation or regulation at early embryonic stages through a maximal accumulation of their transcripts (or protein product) in the mature oocyte. This Drosophila melanogaster (Fruit fly) protein is Serendipity locus protein H-1 (wdn).